The primary structure comprises 184 residues: ATP synthase subunit b, chloroplastic (184 aa).

A helical transmembrane segment spans residues 27 to 49 (LATNLINLSVVIGVLIFFGKGVL).

This sequence belongs to the ATPase B chain family. As to quaternary structure, F-type ATPases have 2 components, F(1) - the catalytic core - and F(0) - the membrane proton channel. F(1) has five subunits: alpha(3), beta(3), gamma(1), delta(1), epsilon(1). F(0) has four main subunits: a(1), b(1), b'(1) and c(10-14). The alpha and beta chains form an alternating ring which encloses part of the gamma chain. F(1) is attached to F(0) by a central stalk formed by the gamma and epsilon chains, while a peripheral stalk is formed by the delta, b and b' chains.

The protein resides in the plastid. Its subcellular location is the chloroplast thylakoid membrane. Its function is as follows. F(1)F(0) ATP synthase produces ATP from ADP in the presence of a proton or sodium gradient. F-type ATPases consist of two structural domains, F(1) containing the extramembraneous catalytic core and F(0) containing the membrane proton channel, linked together by a central stalk and a peripheral stalk. During catalysis, ATP synthesis in the catalytic domain of F(1) is coupled via a rotary mechanism of the central stalk subunits to proton translocation. Functionally, component of the F(0) channel, it forms part of the peripheral stalk, linking F(1) to F(0). The polypeptide is ATP synthase subunit b, chloroplastic (Jasminum nudiflorum (Winter jasmine)).